A 123-amino-acid chain; its full sequence is Small ribosomal subunit protein uS12 (123 aa).

Positions 1-23 (MPTISQLVKKGREKVEKKTKSPA) are disordered. Aspartate 89 is subject to 3-methylthioaspartic acid.

Belongs to the universal ribosomal protein uS12 family. In terms of assembly, part of the 30S ribosomal subunit. Contacts proteins S8 and S17. May interact with IF1 in the 30S initiation complex.

In terms of biological role, with S4 and S5 plays an important role in translational accuracy. Interacts with and stabilizes bases of the 16S rRNA that are involved in tRNA selection in the A site and with the mRNA backbone. Located at the interface of the 30S and 50S subunits, it traverses the body of the 30S subunit contacting proteins on the other side and probably holding the rRNA structure together. The combined cluster of proteins S8, S12 and S17 appears to hold together the shoulder and platform of the 30S subunit. The sequence is that of Small ribosomal subunit protein uS12 from Thermodesulfovibrio yellowstonii (strain ATCC 51303 / DSM 11347 / YP87).